The primary structure comprises 213 residues: Kiwellin (213 aa).

The signal sequence occupies residues 1-24; it reads MAQLSLLVLSLFLTLISLPPPGAS. 3 disulfide bridges follow: cysteine 28-cysteine 60, cysteine 32-cysteine 44, and cysteine 38-cysteine 49. Residues proline 65 and proline 67 each carry the 4-hydroxyproline modification. 4 disulfides stabilise this stretch: cysteine 72–cysteine 90, cysteine 80–cysteine 172, cysteine 119–cysteine 144, and cysteine 166–cysteine 182. The disordered stretch occupies residues 91 to 121; sequence SPPVTSSTPAKLTNNDFSEGGDGGGPSECDE. Residues 93 to 107 show a composition bias toward polar residues; the sequence is PVTSSTPAKLTNNDF.

It belongs to the kiwellin family. Undergoes proteolytic cleavage by actinidin to produce kissper and KiTH. Three forms of KiTH are produced by cleavage at different sites.

It is found in the secreted. Functionally, kissper is an anion-selective pore-forming peptide. In Actinidia chinensis var. chinensis (Chinese soft-hair kiwi), this protein is Kiwellin.